A 156-amino-acid chain; its full sequence is C-type lectin lectoxin-Phi1 (156 aa).

The signal sequence occupies residues 1-23; the sequence is MGRFIFVSLGLLVLAFSLSGIGA. Intrachain disulfides connect cysteine 27/cysteine 38, cysteine 55/cysteine 154, and cysteine 129/cysteine 146. Positions 34–155 constitute a C-type lectin domain; it reads HNVSCYKLIN…CNRRHRFLCK (122 aa). Residues asparagine 35 and asparagine 109 are each glycosylated (N-linked (GlcNAc...) asparagine). Residues 119-121 carry the Mannose-binding motif; sequence EPN. Residues glutamate 127, asparagine 142, and aspartate 143 each coordinate Ca(2+).

It belongs to the true venom lectin family. Expressed by the venom gland.

It localises to the secreted. Functionally, mannose-binding lectin which recognizes specific carbohydrate structures and agglutinates a variety of animal cells by binding to cell-surface glycoproteins and glycolipids. May be a calcium-dependent lectin. The protein is C-type lectin lectoxin-Phi1 of Philodryas olfersii (Green snake).